A 118-amino-acid chain; its full sequence is Autophagy-related protein 8 (118 aa).

Glycine 116 carries the Phosphatidylethanolamine amidated glycine lipid modification. Positions serine 117–isoleucine 118 are cleaved as a propeptide — removed in mature form.

It belongs to the ATG8 family. As to quaternary structure, conjugation to phosphatidylethanolamine (PE) leads to homodimerization. Interacts with ATG1, ATG3, ATG4, ATG7 and ATG12. In terms of processing, the C-terminal Ser-117 and Ile-118 residues of ATG8 are removed by ATG4 to expose Gly-116 at the C-terminus. This Gly-116 forms then a thioester bond with ATG7 (E1-like activating enzyme) before being transferred to ATG3 (the specific E2 conjugating enzyme), in order to be finally amidated with phosphatidylethanolamine. This lipid modification anchors ATG8 to membranes and can be reversed by ATG4, releasing soluble ATG8.

Its subcellular location is the cytoplasmic vesicle. It is found in the cvt vesicle membrane. It localises to the autophagosome membrane. The protein localises to the vacuole membrane. In terms of biological role, ubiquitin-like modifier involved in cytoplasm to vacuole transport (Cvt) vesicles and autophagosome formation. With ATG4, mediates the delivery of the vesicles and autophagosomes to the vacuole via the microtubule cytoskeleton. Required for selective autophagic degradation of the nucleus (nucleophagy) as well as for mitophagy which contributes to regulate mitochondrial quantity and quality by eliminating the mitochondria to a basal level to fulfill cellular energy requirements and preventing excess ROS production. Also participates in membrane fusion events that take place in the early secretory pathway. Also involved in endoplasmic reticulum-specific autophagic process and is essential for the survival of cells subjected to severe ER stress. The ATG8-PE conjugate mediates tethering between adjacent membranes and stimulates membrane hemifusion, leading to expansion of the autophagosomal membrane during autophagy. Moreover not only conjugation, but also subsequent ATG8-PE deconjugation is an important step required to facilitate multiple events during macroautophagy, and especially for efficient autophagosome biogenesis, the assembly of ATG9-containing tubulovesicular clusters into phagophores/autophagosomes, and for the disassembly of PAS-associated ATG components. Contributes to conidiation by regulating the conidial levels of the conidiation-related protein CP15 and mediates fungal oxidation resistance by controlling total superoxide dismutase (SOD) activity. This chain is Autophagy-related protein 8, found in Beauveria bassiana (strain ARSEF 2860) (White muscardine disease fungus).